Consider the following 82-residue polypeptide: Small ribosomal subunit protein bS16 (82 aa).

The protein belongs to the bacterial ribosomal protein bS16 family.

The protein is Small ribosomal subunit protein bS16 of Proteus mirabilis (strain HI4320).